Reading from the N-terminus, the 364-residue chain is UDP-N-acetylglucosamine--N-acetylmuramyl-(pentapeptide) pyrophosphoryl-undecaprenol N-acetylglucosamine transferase (364 aa).

Residues 19-21 (TGG), Asn-131, Arg-167, Ser-195, Ile-250, and Gln-295 each bind UDP-N-acetyl-alpha-D-glucosamine.

The protein belongs to the glycosyltransferase 28 family. MurG subfamily.

It localises to the cell inner membrane. The enzyme catalyses di-trans,octa-cis-undecaprenyl diphospho-N-acetyl-alpha-D-muramoyl-L-alanyl-D-glutamyl-meso-2,6-diaminopimeloyl-D-alanyl-D-alanine + UDP-N-acetyl-alpha-D-glucosamine = di-trans,octa-cis-undecaprenyl diphospho-[N-acetyl-alpha-D-glucosaminyl-(1-&gt;4)]-N-acetyl-alpha-D-muramoyl-L-alanyl-D-glutamyl-meso-2,6-diaminopimeloyl-D-alanyl-D-alanine + UDP + H(+). It functions in the pathway cell wall biogenesis; peptidoglycan biosynthesis. Functionally, cell wall formation. Catalyzes the transfer of a GlcNAc subunit on undecaprenyl-pyrophosphoryl-MurNAc-pentapeptide (lipid intermediate I) to form undecaprenyl-pyrophosphoryl-MurNAc-(pentapeptide)GlcNAc (lipid intermediate II). This Xylella fastidiosa (strain Temecula1 / ATCC 700964) protein is UDP-N-acetylglucosamine--N-acetylmuramyl-(pentapeptide) pyrophosphoryl-undecaprenol N-acetylglucosamine transferase.